Here is a 446-residue protein sequence, read N- to C-terminus: CBL-interacting protein kinase 8 (446 aa).

The Protein kinase domain maps to 13-266 (YEVGRTIGEG…IEEIRNDEWF (254 aa)). ATP contacts are provided by residues 19–27 (IGEGTFAKV) and lysine 42. Aspartate 136 acts as the Proton acceptor in catalysis. Positions 154-181 (DFGLSAWPAQGGALLRTTCGTPNYVAPE) are activation loop. Residues 301–329 (LDDEAGPLTLNAFDLIILSQGLNLAALFD) enclose the NAF domain. Residues 336–365 (KLQNRFLSRKPAKVIMSSMEVVAQSMGYKT) form a PPI region.

Belongs to the protein kinase superfamily. CAMK Ser/Thr protein kinase family. SNF1 subfamily. Mn(2+) is required as a cofactor.

The catalysed reaction is L-seryl-[protein] + ATP = O-phospho-L-seryl-[protein] + ADP + H(+). It catalyses the reaction L-threonyl-[protein] + ATP = O-phospho-L-threonyl-[protein] + ADP + H(+). Functionally, CIPK serine-threonine protein kinases interact with CBL proteins. Binding of a CBL protein to the regulatory NAF domain of CIPK protein lead to the activation of the kinase in a calcium-dependent manner. This is CBL-interacting protein kinase 8 (CIPK8) from Oryza sativa subsp. japonica (Rice).